The sequence spans 218 residues: N-(5'-phosphoribosyl)anthranilate isomerase (218 aa).

Belongs to the TrpF family.

The enzyme catalyses N-(5-phospho-beta-D-ribosyl)anthranilate = 1-(2-carboxyphenylamino)-1-deoxy-D-ribulose 5-phosphate. It participates in amino-acid biosynthesis; L-tryptophan biosynthesis; L-tryptophan from chorismate: step 3/5. The protein is N-(5'-phosphoribosyl)anthranilate isomerase of Bordetella pertussis (strain Tohama I / ATCC BAA-589 / NCTC 13251).